The primary structure comprises 200 residues: dITP/XTP pyrophosphatase (200 aa).

7 to 12 (TSNKHK) contributes to the substrate binding site. Mg(2+)-binding residues include Glu-38 and Asp-73. Asp-73 functions as the Proton acceptor in the catalytic mechanism. Substrate-binding positions include Ser-74, 154–157 (FGYD), Lys-177, and 182–183 (HR).

Belongs to the HAM1 NTPase family. Homodimer. Mg(2+) is required as a cofactor.

It carries out the reaction XTP + H2O = XMP + diphosphate + H(+). It catalyses the reaction dITP + H2O = dIMP + diphosphate + H(+). The enzyme catalyses ITP + H2O = IMP + diphosphate + H(+). Pyrophosphatase that catalyzes the hydrolysis of nucleoside triphosphates to their monophosphate derivatives, with a high preference for the non-canonical purine nucleotides XTP (xanthosine triphosphate), dITP (deoxyinosine triphosphate) and ITP. Seems to function as a house-cleaning enzyme that removes non-canonical purine nucleotides from the nucleotide pool, thus preventing their incorporation into DNA/RNA and avoiding chromosomal lesions. This chain is dITP/XTP pyrophosphatase, found in Campylobacter jejuni subsp. jejuni serotype O:2 (strain ATCC 700819 / NCTC 11168).